The primary structure comprises 136 residues: Protein LpdD (136 aa).

It belongs to the CinA family.

Probably involved in tannin degradation, however the precise biochemical function in metabolism of gallate is unknown. The chain is Protein LpdD from Lactiplantibacillus plantarum (strain ATCC BAA-793 / NCIMB 8826 / WCFS1) (Lactobacillus plantarum).